A 147-amino-acid polypeptide reads, in one-letter code: Lectin-like protein BA14k (147 aa).

Positions 1 to 26 are cleaved as a signal peptide; sequence MNSFRKTCAGALALIFGATSIVPTVA. A helical transmembrane segment spans residues 80–100; the sequence is GWWYPLAAFGAGAIIGGAISQ.

This sequence belongs to the BA14k family.

It localises to the cell membrane. Has immunoglobulin-binding and hemagglutination properties, and can bind to mannose. Essential for virulence. May be involved in LPS biosynthesis or polysaccharide transport. The sequence is that of Lectin-like protein BA14k from Brucella abortus (strain S19).